A 2334-amino-acid chain; its full sequence is Centriolin (2334 aa).

The interval 1-70 (MKKGSERRLS…ESTVPLEPQQ (70 aa)) is disordered. Over residues 21–38 (PGPSSLRSSMRSRSLSPL) the composition is skewed to low complexity. LRR repeat units follow at residues 126–147 (KLEV…DKLL), 148–169 (RLRE…ENMC), 170–191 (NLQK…FAKK), and 194–215 (SLRV…SKLK). Residues 228-266 (NPVVALPHYLQFIIFHLRSLESLEGQPVTTQDRQEAFER) form the LRRCT domain. Coiled-coil stretches lie at residues 265-343 (ERFS…VELT) and 437-800 (DLQL…LNHV). 2 disordered regions span residues 542-562 (DSLD…RGKE) and 751-771 (SLRD…ENNE). S832 carries the post-translational modification Phosphoserine. Residues 858–1102 (EKEEAQVRER…ITRLRDVLNL (245 aa)) adopt a coiled-coil conformation. 3 disordered regions span residues 1154–1198 (SKVS…PLPA), 1213–1245 (KSFS…VPPP), and 1338–1360 (LKSK…EEVD). Positions 1227–1238 (SQEESGLDDQEE) are enriched in acidic residues. Residues 1320–2169 (EHHNLENEVS…MRTLKSEVKD (850 aa)) are a coiled coil. Phosphoserine is present on S1478. The segment at 1951–2121 (MMFQKLQKER…ELVAQDNHER (171 aa)) is required for centrosome localization. Residues 1988–2334 (QKSRLKQLLT…PLEEPNSYRH (347 aa)) are sufficient for interaction with HOOK2. Residues 2291–2307 (TSTSTDSASSPSLPSLV) are compositionally biased toward low complexity. The disordered stretch occupies residues 2291–2334 (TSTSTDSASSPSLPSLVEDSQHGHSQSSFQVLQVPLEEPNSYRH).

Interacts with HOOK2. Interacts with EXOC6 and SNAPIN. Associates with the exocyst complex. As to expression, highly expressed in liver.

Its subcellular location is the cytoplasm. The protein localises to the cytoskeleton. The protein resides in the microtubule organizing center. It localises to the centrosome. It is found in the midbody. Its subcellular location is the midbody ring. Functionally, involved in cell cycle progression and cytokinesis. During the late steps of cytokinesis, anchors exocyst and SNARE complexes at the midbody, thereby allowing secretory vesicle-mediated abscission. In Mus musculus (Mouse), this protein is Centriolin (Cntrl).